Consider the following 519-residue polypeptide: MTFASFLINFYSVIPRLNFKFHWTNDVFNLEWSSEYFQALALVACLGAAVSLLLLVTIIIVWICQACHKNETTGKTRRRVRRLSTVLFIISVLCFFMLGVCLFANEHVNRGMSISINSIINTKKSYQISTAQISQFQEAALNTTVHLKNLEDTVHVESKKTKNATIVQQIDQILTNITDEIDIIAKNGKLFQAKHGDDIGKLEKIRKVLSLYESERWAFLVILLSITMVVLFTGVVAFCKQSKKGAVVFSAIGFFIFVVVWLLISISLPLTIALADFCRDGDQVTRKNLGNLYETVQFYNTCVPVTTHDNLPLPVARHVALLNNIPANKSQLDRLMEVAFNSSAAIVNSSSAVGDDITKMLKLAGAVSSSSSCYVFHDDVVNFYYGTCNQSVAGMSIYMLSILLLGVFLFILLIVVSKTWNLFSRLPNEYTEVDEDDPFFPRGVNDSTIPVDIYGTHVYNPRTRDRTEPSTNTTSGTADEPNAPLWSQNVTVPLVSNSMSRQPFMSDHPYNNYEDRYNM.

Over 1 to 42 the chain is Extracellular; it reads MTFASFLINFYSVIPRLNFKFHWTNDVFNLEWSSEYFQALAL. A helical transmembrane segment spans residues 43–63; sequence VACLGAAVSLLLLVTIIIVWI. The Cytoplasmic portion of the chain corresponds to 64–82; the sequence is CQACHKNETTGKTRRRVRR. Residues 83–103 form a helical membrane-spanning segment; the sequence is LSTVLFIISVLCFFMLGVCLF. The Extracellular segment spans residues 104–217; that stretch reads ANEHVNRGMS…VLSLYESERW (114 aa). N-linked (GlcNAc...) asparagine glycosylation is found at asparagine 142, asparagine 163, and asparagine 176. Residues 218-238 traverse the membrane as a helical segment; sequence AFLVILLSITMVVLFTGVVAF. Topologically, residues 239 to 245 are cytoplasmic; it reads CKQSKKG. A helical transmembrane segment spans residues 246-266; sequence AVVFSAIGFFIFVVVWLLISI. Residues 267-395 are Extracellular-facing; it reads SLPLTIALAD…GTCNQSVAGM (129 aa). 4 N-linked (GlcNAc...) asparagine glycosylation sites follow: asparagine 328, asparagine 341, asparagine 348, and asparagine 389. The helical transmembrane segment at 396–416 threads the bilayer; sequence SIYMLSILLLGVFLFILLIVV. The Cytoplasmic segment spans residues 417-519; that stretch reads SKTWNLFSRL…YNNYEDRYNM (103 aa). The disordered stretch occupies residues 459–485; sequence YNPRTRDRTEPSTNTTSGTADEPNAPL.

Belongs to the tweety family.

The protein resides in the cell membrane. Probable chloride channel. The polypeptide is Protein tweety homolog 1 (ttyh-1) (Caenorhabditis elegans).